A 584-amino-acid polypeptide reads, in one-letter code: Sodium/calcium exchanger NCL1 (584 aa).

Helical transmembrane passes span 77-97 (FLPC…YGFL), 120-140 (LVGG…LVLV), 154-174 (VLIG…LLWG), 215-235 (AARI…PKML), and 245-265 (VLLA…YQVF). EF-hand domains follow at residues 305-340 (PNED…INFE) and 345-380 (DKND…WLNE). The Ca(2+) site is built by Asp-318, Asp-320, Ser-322, Thr-324, Glu-329, Asp-358, Ser-360, Asn-362, and Glu-369. The next 5 helical transmembrane spans lie at 426–446 (WCIT…AAFA), 466–486 (FISF…SAII), 504–524 (YGGV…LIYI), 531–551 (FSSE…FTSF), and 561–581 (LVAY…DFVF).

Belongs to the Ca(2+):cation antiporter (CaCA) (TC 2.A.19) family.

The protein resides in the cell membrane. May function as a sodium/calcium exchanger (NCX) and participate in the maintenance of calcium homeostasis. May play a role abiotic stress responses. This chain is Sodium/calcium exchanger NCL1, found in Oryza sativa subsp. japonica (Rice).